The following is a 500-amino-acid chain: Anthranilate synthase component 1 (500 aa).

Residues S49 and P276–M278 contribute to the L-tryptophan site. G311 to T312 is a binding site for chorismate. Residue E338 participates in Mg(2+) binding. Residues Y426, R446, G460–G462, and G462 each bind chorismate. E475 serves as a coordination point for Mg(2+).

The protein belongs to the anthranilate synthase component I family. In terms of assembly, heterotetramer consisting of two non-identical subunits: a beta subunit (TrpG) and a large alpha subunit (TrpE). The cofactor is Mg(2+).

The enzyme catalyses chorismate + L-glutamine = anthranilate + pyruvate + L-glutamate + H(+). It functions in the pathway amino-acid biosynthesis; L-tryptophan biosynthesis; L-tryptophan from chorismate: step 1/5. With respect to regulation, feedback inhibited by tryptophan. Part of a heterotetrameric complex that catalyzes the two-step biosynthesis of anthranilate, an intermediate in the biosynthesis of L-tryptophan. In the first step, the glutamine-binding beta subunit (TrpG) of anthranilate synthase (AS) provides the glutamine amidotransferase activity which generates ammonia as a substrate that, along with chorismate, is used in the second step, catalyzed by the large alpha subunit of AS (TrpE) to produce anthranilate. In the absence of TrpG, TrpE can synthesize anthranilate directly from chorismate and high concentrations of ammonia. This Cereibacter sphaeroides (strain ATCC 17023 / DSM 158 / JCM 6121 / CCUG 31486 / LMG 2827 / NBRC 12203 / NCIMB 8253 / ATH 2.4.1.) (Rhodobacter sphaeroides) protein is Anthranilate synthase component 1 (trpE).